Consider the following 216-residue polypeptide: Minor capsid protein P6 (216 aa).

A hydrophobic region spans residues 1 to 21; the sequence is MILVGIAVLILLAVFAILYYK.

As to quaternary structure, interacts with the major capsid protein.

It is found in the virion. Its function is as follows. One of the minor capsid proteins that constitute a network internal to the major capsid proteins and outside the lipid membrane. The minor capsid proteins glue and stabilize the capsomers. The protein is Minor capsid protein P6 of Paramecium bursaria Chlorella virus 1 (PBCV-1).